Reading from the N-terminus, the 445-residue chain is Probable aminotransferase TAT3 (445 aa).

The protein belongs to the class-I pyridoxal-phosphate-dependent aminotransferase family. Requires pyridoxal 5'-phosphate as cofactor. Expressed in roots, leaves and cauline leaves.

This Arabidopsis thaliana (Mouse-ear cress) protein is Probable aminotransferase TAT3 (TAT3).